The primary structure comprises 144 residues: Transcription antitermination protein NusB (144 aa).

The protein belongs to the NusB family.

Functionally, involved in transcription antitermination. Required for transcription of ribosomal RNA (rRNA) genes. Binds specifically to the boxA antiterminator sequence of the ribosomal RNA (rrn) operons. In Pasteurella multocida (strain Pm70), this protein is Transcription antitermination protein NusB.